The following is a 422-amino-acid chain: Enolase (422 aa).

Residue Gln-162 coordinates (2R)-2-phosphoglycerate. The active-site Proton donor is Glu-204. Residues Asp-241, Glu-284, and Asp-311 each coordinate Mg(2+). (2R)-2-phosphoglycerate is bound by residues Lys-336, Arg-365, Ser-366, and Lys-387. Lys-336 acts as the Proton acceptor in catalysis.

Belongs to the enolase family. Requires Mg(2+) as cofactor.

It is found in the cytoplasm. The protein resides in the secreted. The protein localises to the cell surface. It catalyses the reaction (2R)-2-phosphoglycerate = phosphoenolpyruvate + H2O. It functions in the pathway carbohydrate degradation; glycolysis; pyruvate from D-glyceraldehyde 3-phosphate: step 4/5. Functionally, catalyzes the reversible conversion of 2-phosphoglycerate (2-PG) into phosphoenolpyruvate (PEP). It is essential for the degradation of carbohydrates via glycolysis. This chain is Enolase, found in Bartonella quintana (strain Toulouse) (Rochalimaea quintana).